We begin with the raw amino-acid sequence, 152 residues long: Transcriptional regulator MraZ (152 aa).

SpoVT-AbrB domains are found at residues Ala-5–Glu-52 and Ala-81–Ser-124.

This sequence belongs to the MraZ family. As to quaternary structure, forms oligomers.

The protein resides in the cytoplasm. It localises to the nucleoid. In Shewanella baltica (strain OS223), this protein is Transcriptional regulator MraZ.